Here is a 234-residue protein sequence, read N- to C-terminus: Thymidylate kinase (234 aa).

10 to 17 (GGEGSGKT) is a binding site for ATP.

This sequence belongs to the thymidylate kinase family.

It carries out the reaction dTMP + ATP = dTDP + ADP. Phosphorylation of dTMP to form dTDP in both de novo and salvage pathways of dTTP synthesis. The protein is Thymidylate kinase of Cyanothece sp. (strain PCC 7425 / ATCC 29141).